Reading from the N-terminus, the 498-residue chain is Zinc finger protein 395 (498 aa).

The interval 129–165 (QKPLSSPIEQSLPTSPGATSTSAQRSVSRSIDVPKRR) is disordered. The segment covering 130-157 (KPLSSPIEQSLPTSPGATSTSAQRSVSR) has biased composition (polar residues). Residues 171 to 180 (MDEMMAAMVL) carry the Nuclear export signal motif. Residues 209-245 (KEGGDVSDSGSSTTSGHWSASSGVSTPSPPHTDASPK) form a disordered region. The segment covering 214–231 (VSDSGSSTTSGHWSASSG) has biased composition (low complexity). The C2H2-type zinc finger occupies 285–310 (YKCLWPNCGKLLRSIVGIKRHVKTQH).

The protein localises to the cytoplasm. It is found in the nucleus. The polypeptide is Zinc finger protein 395 (znf395) (Xenopus laevis (African clawed frog)).